The primary structure comprises 1388 residues: Rho-associated protein kinase 2 (1388 aa).

The disordered stretch occupies residues 1–24; the sequence is MSRPPPTGKMPGAPEAVSGDGAGA. The Protein kinase domain maps to 92 to 354; the sequence is YDVVKVIGRG…VEEIKQHPFF (263 aa). ATP is bound by residues 98 to 106 and Lys-121; that span reads IGRGAFGEV. Asp-214 functions as the Proton acceptor in the catalytic mechanism. Residues 357-425 enclose the AGC-kinase C-terminal domain; the sequence is DQWNWDNIRE…YRENLLLSDS (69 aa). Positions 363–784 are interaction with PPP1R12A; the sequence is NIRETAAPVV…INELLKQKDV (422 aa). Residues 373–420 form an interaction with NPM1 region; it reads PELSSDIDSSNFDDIEDDKGDVETFPIPKAFVGNQLPFIGFTYYRENL. Position 414 is a phosphothreonine; by ROCK2 (Thr-414). 2 coiled-coil regions span residues 439–1025 and 1053–1131; these read NEES…KQLL and DTDV…IGLD. The REM-1 domain maps to 497-573; the sequence is TLRQLEREKA…LDETNALLRT (77 aa). Over residues 512–530 the composition is skewed to basic and acidic residues; it reads NAEYQRKADHEADKKRNLE. The tract at residues 512-532 is disordered; that stretch reads NAEYQRKADHEADKKRNLEND. Tyr-722 carries the phosphotyrosine; by SRC modification. Residues 979-1047 form the RhoBD domain; sequence TSDVANLANE…LAEIMNRKEP (69 aa). The RHOA binding stretch occupies residues 979-1047; sequence TSDVANLANE…LAEIMNRKEP (69 aa). Ser-1137 is subject to Phosphoserine. In terms of domain architecture, PH spans 1150–1349; sequence ESRLEGWLSL…WVSRLVKKIP (200 aa). Thr-1212 carries the post-translational modification Phosphothreonine. Residues 1260–1315 form a Phorbol-ester/DAG-type zinc finger; sequence GHEFIPTLYHFPTNCEACMKPLWHMFKPPPALECRRCHIKCHKDHMDKKEEIIAPC. Positions 1345–1388 are disordered; that stretch reads VKKIPKKPPAPDPFARSSPRTSMKIQQNQSIRRPSRQLAPNKPS. 2 positions are modified to phosphoserine: Ser-1362 and Ser-1374. Positions 1362–1376 are enriched in polar residues; it reads SPRTSMKIQQNQSIR.

It belongs to the protein kinase superfamily. AGC Ser/Thr protein kinase family. As to quaternary structure, homodimer. Interacts with IRS1. Interacts with RAF1. Interacts with RHOA (activated by GTP). Interacts with RHOB and RHOC. Interacts with PPP1R12A. Interacts with EP300. Interacts with CHORDC1. Interacts with BRCA2. Interacts with NPM1; this interaction enhances ROCK2 activity. Interacts with SORL1. Interacts with PJVK. The cofactor is Mg(2+). Autophosphorylated. Phosphorylation at Tyr-722 reduces its binding to RHOA and is crucial for focal adhesion dynamics. Dephosphorylation by PTPN11 stimulates its RHOA binding activity. Post-translationally, cleaved by granzyme B during apoptosis. This leads to constitutive activation of the kinase and membrane blebbing. In terms of tissue distribution, highly expressed in whole brain and in cerebellum, and at lower levels in heart and lung. Detected at low levels in skeletal muscle, spleen, liver, kidney and pancreas.

It localises to the cytoplasm. It is found in the cell membrane. The protein localises to the nucleus. The protein resides in the cytoskeleton. Its subcellular location is the microtubule organizing center. It localises to the centrosome. It carries out the reaction L-seryl-[protein] + ATP = O-phospho-L-seryl-[protein] + ADP + H(+). The catalysed reaction is L-threonyl-[protein] + ATP = O-phospho-L-threonyl-[protein] + ADP + H(+). Activated by RHOA binding. Inhibited by Y-27632. In terms of biological role, protein kinase which is a key regulator of actin cytoskeleton and cell polarity. Involved in regulation of smooth muscle contraction, actin cytoskeleton organization, stress fiber and focal adhesion formation, neurite retraction, cell adhesion and motility via phosphorylation of ADD1, BRCA2, CNN1, EZR, DPYSL2, EP300, MSN, MYL9/MLC2, NPM1, RDX, PPP1R12A and VIM. Phosphorylates SORL1 and IRF4. Acts as a negative regulator of VEGF-induced angiogenic endothelial cell activation. Positively regulates the activation of p42/MAPK1-p44/MAPK3 and of p90RSK/RPS6KA1 during myogenic differentiation. Plays an important role in the timely initiation of centrosome duplication. Inhibits keratinocyte terminal differentiation. May regulate closure of the eyelids and ventral body wall through organization of actomyosin bundles. Plays a critical role in the regulation of spine and synaptic properties in the hippocampus. Plays an important role in generating the circadian rhythm of the aortic myofilament Ca(2+) sensitivity and vascular contractility by modulating the myosin light chain phosphorylation. The protein is Rho-associated protein kinase 2 (ROCK2) of Bos taurus (Bovine).